A 1452-amino-acid polypeptide reads, in one-letter code: Protein clueless (1452 aa).

2 disordered regions span residues 1–93 and 266–288; these read MALE…SNGH and KKTR…VSEP. The span at 8-24 shows a compositional bias: low complexity; that stretch reads KNSNATATSDATATKAS. The segment covering 42-59 has biased composition (polar residues); the sequence is PIPNSNHQNSNQNLVNGN. Positions 68–77 are enriched in basic residues; the sequence is AKKKGKKNRN. Position 272 is a phosphoserine (Ser-272). One can recognise a Clu domain in the interval 426–668; it reads RAEDAFSSKL…RTFPPDVNFL (243 aa). Disordered stretches follow at residues 726 to 775, 962 to 1013, and 1414 to 1452; these read KQSE…GDTK, AVSS…SSVS, and ANNN…ATSS. Over residues 750–766 the composition is skewed to basic and acidic residues; sequence GADKTDVKEEKNEENEK. Residues 970–985 show a composition bias toward basic residues; it reads KKRGNGGKHNKHKSSK. The span at 990-1013 shows a compositional bias: low complexity; that stretch reads QQQQQATGNQNGSSSGSSNGSSVS. Residues 1423 to 1433 are compositionally biased toward basic and acidic residues; sequence AVPKDVEEQKE.

It belongs to the CLU family.

The protein resides in the cytoplasm. In terms of biological role, mRNA-binding protein involved in proper cytoplasmic distribution of mitochondria. The sequence is that of Protein clueless from Drosophila erecta (Fruit fly).